We begin with the raw amino-acid sequence, 210 residues long: MQPGLWLLLATQLAALRGSSVLQQAPGSVMVQTNGMVIMSCEAKTSPTSTRIYWLRHRQAPSPDSHYECLAYWDPIKGIVYGQEVEPEKLTVFPDATRSILNLTSVKPADSGIYFCMTVGSPELTFGKGTRLSVVDVLPTNSQPTKKPTPRKKMCRPPSPVTQKGPSCGLLTLGLLVAGVLVLLVSLGVAIHLYRLKRRARLRLLKQFYK.

Positions 1-21 are cleaved as a signal peptide; it reads MQPGLWLLLATQLAALRGSSV. Residues 22–132 form the Ig-like V-type domain; sequence LQQAPGSVMV…ELTFGKGTRL (111 aa). Over 22-170 the chain is Extracellular; sequence LQQAPGSVMV…VTQKGPSCGL (149 aa). A disulfide bridge links Cys41 with Cys116. Asn102 carries N-linked (GlcNAc...) asparagine glycosylation. Positions 139 to 161 are disordered; that stretch reads PTNSQPTKKPTPRKKMCRPPSPV. A helical transmembrane segment spans residues 171–191; that stretch reads LTLGLLVAGVLVLLVSLGVAI. Residues 192-210 lie on the Cytoplasmic side of the membrane; that stretch reads HLYRLKRRARLRLLKQFYK.

As to quaternary structure, forms disulfide-linked heterodimers with CD8A at the cell surface. Interacts with CD3D; this interaction couples TCR-CD3 with CD8. Interacts with LCK. Phosphorylated as a consequence of T-cell activation. Post-translationally, palmitoylated at the cytoplasmic tail and thereby targets the heterodimer CD8A/CD8B to lipid rafts unlike CD8A homodimers.

Its subcellular location is the cell membrane. In terms of biological role, integral membrane glycoprotein that plays an essential role in the immune response and serves multiple functions in responses against both external and internal offenses. In T-cells, functions primarily as a coreceptor for MHC class I molecule:peptide complex. The antigens presented by class I peptides are derived from cytosolic proteins while class II derived from extracellular proteins. Interacts simultaneously with the T-cell receptor (TCR) and the MHC class I proteins presented by antigen presenting cells (APCs). In turn, recruits the Src kinase LCK to the vicinity of the TCR-CD3 complex. A palmitoylation site in the cytoplasmic tail of CD8B chain contributes to partitioning of CD8 into the plasma membrane lipid rafts where signaling proteins are enriched. Once LCK recruited, it initiates different intracellular signaling pathways by phosphorylating various substrates ultimately leading to lymphokine production, motility, adhesion and activation of cytotoxic T-lymphocytes (CTLs). Additionally, plays a critical role in thymic selection of CD8+ T-cells. This Felis catus (Cat) protein is T-cell surface glycoprotein CD8 beta chain (CD8B).